A 303-amino-acid chain; its full sequence is ATP synthase subunit a (303 aa).

The next 6 membrane-spanning stretches (helical) occupy residues 59 to 79 (HTVMMWLAALLLMATLFIWGN), 122 to 142 (FLLTVFFFILFMNMLGMVPWM), 148 to 168 (NLAVTMALALCTFVITQVAGI), 181 to 201 (TGGVAPWLWPIMVPVEVLGLF), 220 to 240 (IVYFFLLGLIFLLGHPAVAAV), and 244 to 264 (FAFAIFLLELFVAFVQAYVFA). Residues 281–290 (HDDHGHDHPE) are compositionally biased toward basic and acidic residues. The segment at 281-303 (HDDHGHDHPEAGPSHDQGKAHHA) is disordered.

Belongs to the ATPase A chain family. As to quaternary structure, F-type ATPases have 2 components, CF(1) - the catalytic core - and CF(0) - the membrane proton channel. CF(1) has five subunits: alpha(3), beta(3), gamma(1), delta(1), epsilon(1). CF(0) has three main subunits: a(1), b(2) and c(9-12). The alpha and beta chains form an alternating ring which encloses part of the gamma chain. CF(1) is attached to CF(0) by a central stalk formed by the gamma and epsilon chains, while a peripheral stalk is formed by the delta and b chains.

The protein localises to the cell inner membrane. In terms of biological role, key component of the proton channel; it plays a direct role in the translocation of protons across the membrane. The sequence is that of ATP synthase subunit a from Myxococcus xanthus (strain DK1622).